Consider the following 316-residue polypeptide: Serpentine receptor class delta-48 (316 aa).

7 helical membrane passes run phenylalanine 8–isoleucine 28, phenylalanine 42–leucine 62, leucine 89–isoleucine 109, valine 127–leucine 147, phenylalanine 185–isoleucine 205, threonine 236–valine 256, and isoleucine 269–valine 289.

It belongs to the nematode receptor-like protein srd family.

The protein resides in the membrane. The sequence is that of Serpentine receptor class delta-48 (srd-48) from Caenorhabditis elegans.